Here is a 221-residue protein sequence, read N- to C-terminus: Charged multivesicular body protein 3 (221 aa).

The N-myristoyl glycine moiety is linked to residue Gly-2. Positions 22–54 form a coiled coil; sequence KIRKEMRVIDRQIRDIQREEEKVKRSIKDAAKK. Important for autoinhibitory function stretches follow at residues 59 to 64 and 168 to 169; these read VCIILA and IL. A coiled-coil region spans residues 144–221; sequence LEDTLEGMDD…MQSRLAALRS (78 aa). The disordered stretch occupies residues 181-221; sequence PSKVTDLPDPVAIGATAAPEEESEEEEEIEEMQSRLAALRS. Residues 199 to 211 are compositionally biased toward acidic residues; that stretch reads PEEESEEEEEIEE. Positions 200-210 match the MIT-interacting motif motif; sequence EEESEEEEEIE. Interaction with STAMBP stretches follow at residues 202-206 and 220-221; these read ESEEE and RS.

Belongs to the SNF7 family. In terms of assembly, probable core component of the endosomal sorting required for transport complex III (ESCRT-III). ESCRT-III components are thought to multimerize to form a flat lattice on the perimeter membrane of the endosome. Several assembly forms of ESCRT-III may exist that interact and act sequentially.

It is found in the cytoplasm. The protein resides in the cytosol. Its subcellular location is the membrane. The protein localises to the endosome. It localises to the late endosome membrane. Functionally, probable core component of the endosomal sorting required for transport complex III (ESCRT-III) which is involved in multivesicular bodies (MVBs) formation and sorting of endosomal cargo proteins into MVBs. MVBs contain intraluminal vesicles (ILVs) that are generated by invagination and scission from the limiting membrane of the endosome and mostly are delivered to lysosomes enabling degradation of membrane proteins, such as stimulated growth factor receptors, lysosomal enzymes and lipids. Involved in late stages of cytokinesis. Plays a role in endosomal sorting/trafficking of EGF receptor. This chain is Charged multivesicular body protein 3 (chmp3), found in Danio rerio (Zebrafish).